A 290-amino-acid chain; its full sequence is MNKLVSGNNIIPSVNFHLWEPCNMRCKFCFAKFQDVKSTILPKGHLKKEQTLEIVEQLAEYGFQKITFVGGEPTLCPWISELIKKANLLGMTTMIVTNGSNLSKDFLVQNQSYLDWITLSIDSINSSTNKVVGRSTNSIHPDRIYYNQLIQTIYEYGYRLKINTVVTKANLNEDLNDFVNDAKPERWKVFQVLPVRGQNDNDIDELLISEKEFNEYVNRHSKNKFLITETNTDMTNTYVMVDPAGRFFNNQNGNYMYSDHILEVGVQKAFEEMGYNYDKFIDRKGIYQWK.

The Radical SAM core domain maps to 6 to 226; it reads SGNNIIPSVN…VNRHSKNKFL (221 aa). [4Fe-4S] cluster is bound by residues cysteine 22, cysteine 26, and cysteine 29.

Belongs to the radical SAM superfamily. Viperin family. [4Fe-4S] cluster serves as cofactor.

It carries out the reaction UTP + AH2 + S-adenosyl-L-methionine = 3'-deoxy-3',4'-didehydro-UTP + 5'-deoxyadenosine + L-methionine + A + H2O + H(+). Functionally, expression of pVip47 in E.coli (strain MG1655) confers resistance to phage P1; has no effect against T7. Catalyzes the conversion of uridine triphosphate (UTP) to 3'-deoxy-3',4'-didehydro-UTP (ddhUTP), probably via a SAM-dependent radical mechanism. The modified nucleotide represses transcription from T7 RNA polymerase-directed genes (possibly by acting as chain terminators), strongly suggesting these nucleotides block viral polymerase transcription. How this protein allows bacteria to resist viruses that do not encode their own RNA polymerase (such as lambda, P1) is unknown. In Flammeovirga pacifica, this protein is S-adenosylmethionine-dependent nucleotide dehydratase.